The primary structure comprises 348 residues: Protein pelota homolog (348 aa).

This sequence belongs to the eukaryotic release factor 1 family. Pelota subfamily. Monomer. It depends on a divalent metal cation as a cofactor.

The protein resides in the cytoplasm. Its function is as follows. May function in recognizing stalled ribosomes, interact with stem-loop structures in stalled mRNA molecules, and effect endonucleolytic cleavage of the mRNA. May play a role in the release non-functional ribosomes and degradation of damaged mRNAs. Has endoribonuclease activity. The protein is Protein pelota homolog of Methanococcus maripaludis (strain DSM 14266 / JCM 13030 / NBRC 101832 / S2 / LL).